Reading from the N-terminus, the 215-residue chain is Probable transaldolase (215 aa).

Lysine 83 acts as the Schiff-base intermediate with substrate in catalysis.

It belongs to the transaldolase family. Type 3B subfamily.

Its subcellular location is the cytoplasm. The catalysed reaction is D-sedoheptulose 7-phosphate + D-glyceraldehyde 3-phosphate = D-erythrose 4-phosphate + beta-D-fructose 6-phosphate. The protein operates within carbohydrate degradation; pentose phosphate pathway; D-glyceraldehyde 3-phosphate and beta-D-fructose 6-phosphate from D-ribose 5-phosphate and D-xylulose 5-phosphate (non-oxidative stage): step 2/3. Its function is as follows. Transaldolase is important for the balance of metabolites in the pentose-phosphate pathway. This Clostridium perfringens (strain SM101 / Type A) protein is Probable transaldolase.